Reading from the N-terminus, the 153-residue chain is Natriuretic peptides A (153 aa).

A signal peptide spans 1-25 (MGPFSTITVSFLFCLAFWHPDQIGA). Propeptides lie at residues 26-123 (NPVY…TAPR) and 93-103 (DGEALGRSTWE). The interval 54 to 101 (EDEAVPPQALSEQSDEAGAALSPLPEVPPWTGEVSPAQRDGEALGRST) is disordered. Position 129 is a phosphoserine (serine 129). A disulfide bridge links cysteine 130 with cysteine 146. Positions 147–151 (NSFRY) are important for degradation of atrial natriuretic peptide by IDE.

This sequence belongs to the natriuretic peptide family. Homodimer; disulfide-linked antiparallel dimer. Post-translationally, the precursor molecule is proteolytically cleaved by CORIN at Arg-123 to produce the atrial natriuretic peptide. Undergoes further proteolytic cleavage by unknown proteases to give rise to long-acting natriuretic peptide, vessel dilator and kaliuretic peptide. Additional processing gives rise to the auriculin and atriopeptin peptides. In the kidneys, alternative processing by an unknown protease results in the peptide urodilatin. In terms of processing, cleavage by MME initiates degradation of the factor and thereby regulates its activity. Degradation by IDE results in reduced activation of NPR1 (in vitro). During IDE degradation, the resulting products can temporarily stimulate NPR2 to produce cGMP, before the fragments are completely degraded and inactivated by IDE (in vitro). Degraded by IDE. Post-translationally, phosphorylation on Ser-129 decreases vasorelaxant activity.

The protein localises to the secreted. It is found in the perikaryon. It localises to the cell projection. Its function is as follows. Hormone that plays a key role in mediating cardio-renal homeostasis, and is involved in vascular remodeling and regulating energy metabolism. Acts by specifically binding and stimulating NPR1 to produce cGMP, which in turn activates effector proteins, such as PRKG1, that drive various biological responses. Regulates vasodilation, natriuresis, diuresis and aldosterone synthesis and is therefore essential for regulating blood pressure, controlling the extracellular fluid volume and maintaining the fluid-electrolyte balance. Also involved in inhibiting cardiac remodeling and cardiac hypertrophy by inducing cardiomyocyte apoptosis and attenuating the growth of cardiomyocytes and fibroblasts. Plays a role in female pregnancy by promoting trophoblast invasion and spiral artery remodeling in uterus, and thus prevents pregnancy-induced hypertension. In adipose tissue, acts in various cGMP- and PKG-dependent pathways to regulate lipid metabolism and energy homeostasis. This includes up-regulating lipid metabolism and mitochondrial oxygen utilization by activating the AMP-activated protein kinase (AMPK), and increasing energy expenditure by acting via MAPK11 to promote the UCP1-dependent thermogenesis of brown adipose tissue. Binds the clearance receptor NPR3 which removes the hormone from circulation. In terms of biological role, may have a role in cardio-renal homeostasis through regulation of natriuresis, diuresis, vasodilation, and inhibiting aldosterone synthesis. In vitro, promotes the production of cGMP and induces vasodilation. May promote natriuresis, at least in part, by enhancing prostaglandin E2 synthesis resulting in the inhibition of renal Na+-K+-ATPase. However reports on the involvement of this peptide in mammal blood volume and blood pressure homeostasis are conflicting; according to a report, in vivo it is not sufficient to activate cGMP and does not inhibit collecting duct transport nor effect diuresis and natriuresis. Appears to bind to specific receptors that are distinct from the receptors bound by atrial natriuretic peptide and vessel dilator. Possibly enhances protein excretion in urine by decreasing proximal tubular protein reabsorption. Functionally, may have a role in cardio-renal homeostasis through regulation of natriuresis, diuresis, and vasodilation. In vitro, promotes the production of cGMP and induces vasodilation. May promote natriuresis, at least in part, by enhancing prostaglandin E2 synthesis resulting in the inhibition of renal Na+-K+-ATPase. However reports on the involvement of this peptide in mammal blood volume and blood pressure homeostasis are conflicting; according to a report it is not sufficient to activate cGMP and does not inhibit collecting duct transport nor effect diuresis and natriuresis. Appears to bind to specific receptors that are distinct from the receptors bound by the atrial natriuretic and long-acting natriuretic peptides. Possibly functions in protein excretion in urine by maintaining the integrity of the proximal tubules and enhancing protein excretion by decreasing proximal tubular protein reabsorption. May have a role in cardio-renal homeostasis through regulation of diuresis and inhibiting aldosterone synthesis. In vitro, promotes the production of cGMP and induces vasodilation. May promote natriuresis, at least in part, by enhancing prostaglandin E2 synthesis resulting in the inhibition of renal Na+-K+-ATPase. May have a role in potassium excretion but not sodium excretion (natriuresis). Possibly enhances protein excretion in urine by decreasing proximal tubular protein reabsorption. Its function is as follows. Hormone produced in the kidneys that appears to be important for maintaining cardio-renal homeostasis. Mediates vasodilation, natriuresis and diuresis primarily in the renal system, in order to maintain the extracellular fluid volume and control the fluid-electrolyte balance. Specifically binds and stimulates cGMP production by renal transmembrane receptors, likely NPR1. Urodilatin not ANP, may be the natriuretic peptide responsible for the regulation of sodium and water homeostasis in the kidney. In terms of biological role, may have a role in cardio-renal homeostasis through regulation of natriuresis and vasodilation. In vivo promotes natriuresis and in vitro, vasodilates renal artery strips. Functionally, may have a role in cardio-renal homeostasis through regulation of regulation of natriuresis and vasodilation. In vivo promotes natriuresis. In vitro, vasodilates intestinal smooth muscle but not smooth muscle strips. May have a role in cardio-renal homeostasis through regulation of natriuresis and vasodilation. In vivo promotes natriuresis. In vitro, selectively vasodilates intestinal and vascular smooth muscle strips. Its function is as follows. May have a role in cardio-renal homeostasis through regulation of natriuresis and vasodilation. In vivo promotes natriuresis. In vitro, selectively vasodilates intestinal smooth muscle but not vascular smooth muscle strips. The sequence is that of Natriuretic peptides A (NPPA) from Oryctolagus cuniculus (Rabbit).